A 141-amino-acid chain; its full sequence is Large ribosomal subunit protein uL23A (141 aa).

Phosphoserine occurs at positions 68 and 70.

The protein belongs to the universal ribosomal protein uL23 family. As to quaternary structure, component of the large ribosomal subunit (LSU). Mature yeast ribosomes consist of a small (40S) and a large (60S) subunit. The 40S small subunit contains 1 molecule of ribosomal RNA (18S rRNA) and at least 33 different proteins. The large 60S subunit contains 3 rRNA molecules (25S, 5.8S and 5S rRNA) and at least 46 different proteins. uL23 is associated with the polypeptide exit tunnel.

The protein resides in the cytoplasm. This protein binds to a specific region on the 26S rRNA. Functionally, component of the ribosome, a large ribonucleoprotein complex responsible for the synthesis of proteins in the cell. The small ribosomal subunit (SSU) binds messenger RNAs (mRNAs) and translates the encoded message by selecting cognate aminoacyl-transfer RNA (tRNA) molecules. The large subunit (LSU) contains the ribosomal catalytic site termed the peptidyl transferase center (PTC), which catalyzes the formation of peptide bonds, thereby polymerizing the amino acids delivered by tRNAs into a polypeptide chain. The nascent polypeptides leave the ribosome through a tunnel in the LSU and interact with protein factors that function in enzymatic processing, targeting, and the membrane insertion of nascent chains at the exit of the ribosomal tunnel. uL23 is a major component of the universal docking site for these factors at the polypeptide exit tunnel. The sequence is that of Large ribosomal subunit protein uL23A (rpl2501) from Schizosaccharomyces pombe (strain 972 / ATCC 24843) (Fission yeast).